A 717-amino-acid chain; its full sequence is Probable inactive histone-lysine N-methyltransferase SUVR2 (717 aa).

Positions 61–73 (QAIQESEEKKADE) are enriched in basic and acidic residues. The tract at residues 61–136 (QAIQESEEKK…LGSPTLEGPS (76 aa)) is disordered. Residues 120 to 130 (SALASPSLGSP) are compositionally biased toward low complexity. Zn(2+) is bound by residues C445, C446, C449, C453, C462, C529, C533, C535, and C539. The Pre-SET domain occupies 458-547 (MACRCATAFN…NCGNRVVQQG (90 aa)). The region spanning 550–679 (NKLQVFFTPN…AMEELTWDYG (130 aa)) is the SET domain. S-adenosyl-L-methionine contacts are provided by residues 561–563 (RGW) and 635–636 (NH). C638 is a Zn(2+) binding site. Position 678 (Y678) interacts with S-adenosyl-L-methionine. The Post-SET domain occupies 690 to 706 (SPFHCQCGSDFCRVRKQ). Zn(2+)-binding residues include C694, C696, and C701.

It belongs to the class V-like SAM-binding methyltransferase superfamily. Histone-lysine methyltransferase family. Interacts with SUVR1, CHR19, CHR28 and itself. Interacts with CHR27.

The protein resides in the nucleus. It localises to the chromosome. Its function is as follows. Probable inactive histone-lysine methyltransferase that acts as regulator of transctiptional gene silencing independently of histone H3K9 methylation. Contributes to transcriptional gene silencing at RNA-directed DNA methylation (RdDM) target loci but also at RdDM-independent target loci. Forms a complex with SUVR1 and associates with the SNF2-related chromatin-remodeling proteins CHR19, CHR27, and CHR28, thereby mediating nucleosome positioning and transcriptional silencing. Does not possess histone-lysine methyltransferase activity in vitro, and the conserved catalytic sites of SUVR2 are dispensable for its function in transcriptional gene silencing. This is Probable inactive histone-lysine N-methyltransferase SUVR2 (SUVR2) from Arabidopsis thaliana (Mouse-ear cress).